The following is a 214-amino-acid chain: MILAEGVQKFSLFFLEGAVLVGALGVVLLPNILYSAFLLGGVLMSIAGIYLLLNADFVAAAQVLIYVGAINVLILFAIMLVNKNDGRVAAGTSNSSGVTNNIIGLTCIGLAGFLIDMIVTTPWLPKGVAVATSLSAKADSTAAQTQLKGSISIIGLHIFSDFLLPFEVISLLLLVTLVGAIVIARRERLSDLEISKISLLNLPDPSNGKTPSLK.

5 consecutive transmembrane segments (helical) span residues 10 to 30, 32 to 52, 61 to 81, 102 to 122, and 163 to 183; these read FSLF…VLLP, ILYS…IYLL, AQVL…IMLV, IIGL…VTTP, and LLPF…AIVI.

Belongs to the complex I subunit 6 family. As to quaternary structure, NDH is composed of at least 16 different subunits, 5 of which are encoded in the nucleus.

It is found in the plastid. It localises to the chloroplast thylakoid membrane. The catalysed reaction is a plastoquinone + NADH + (n+1) H(+)(in) = a plastoquinol + NAD(+) + n H(+)(out). It carries out the reaction a plastoquinone + NADPH + (n+1) H(+)(in) = a plastoquinol + NADP(+) + n H(+)(out). NDH shuttles electrons from NAD(P)H:plastoquinone, via FMN and iron-sulfur (Fe-S) centers, to quinones in the photosynthetic chain and possibly in a chloroplast respiratory chain. The immediate electron acceptor for the enzyme in this species is believed to be plastoquinone. Couples the redox reaction to proton translocation, and thus conserves the redox energy in a proton gradient. The polypeptide is NAD(P)H-quinone oxidoreductase subunit 6, chloroplastic (ndhG) (Chlorokybus atmophyticus (Soil alga)).